We begin with the raw amino-acid sequence, 70 residues long: Large ribosomal subunit protein eL38 (70 aa).

The protein belongs to the eukaryotic ribosomal protein eL38 family.

The polypeptide is Large ribosomal subunit protein eL38 (RpL38) (Drosophila melanogaster (Fruit fly)).